Consider the following 396-residue polypeptide: Acetate kinase (396 aa).

Asn8 lines the Mg(2+) pocket. Lys15 serves as a coordination point for ATP. Arg89 serves as a coordination point for substrate. Asp146 (proton donor/acceptor) is an active-site residue. ATP-binding positions include 206-210 (HIGNG), 283-285 (DMR), and 331-335 (GVGEN). Residue Glu383 coordinates Mg(2+).

Belongs to the acetokinase family. As to quaternary structure, homodimer. Mg(2+) is required as a cofactor. The cofactor is Mn(2+).

Its subcellular location is the cytoplasm. It catalyses the reaction acetate + ATP = acetyl phosphate + ADP. Its pathway is metabolic intermediate biosynthesis; acetyl-CoA biosynthesis; acetyl-CoA from acetate: step 1/2. Catalyzes the formation of acetyl phosphate from acetate and ATP. Can also catalyze the reverse reaction. This Streptococcus pneumoniae (strain Hungary19A-6) protein is Acetate kinase.